The primary structure comprises 328 residues: PhoH-like protein (328 aa).

135–142 contributes to the ATP binding site; that stretch reads GPAGTGKT.

It belongs to the PhoH family.

The protein localises to the cytoplasm. In Synechocystis sp. (strain ATCC 27184 / PCC 6803 / Kazusa), this protein is PhoH-like protein.